The following is a 68-amino-acid chain: MSELNTKTSPATNQAAGQEEKGKAGNVKKAEEEEEIDIDLTAPETEKAALAIQGKFRRFQKRKKDPSS.

The span at 1-16 (MSELNTKTSPATNQAA) shows a compositional bias: polar residues. Residues 1 to 45 (MSELNTKTSPATNQAAGQEEKGKAGNVKKAEEEEEIDIDLTAPET) are disordered. T8 carries the phosphothreonine modification. The span at 18–31 (QEEKGKAGNVKKAE) shows a compositional bias: basic and acidic residues. The region spanning 45-68 (TEKAALAIQGKFRRFQKRKKDPSS) is the IQ domain.

This sequence belongs to the PCP4 family.

The sequence is that of Purkinje cell protein 4-like protein 1 (PCP4L1) from Homo sapiens (Human).